The sequence spans 234 residues: Glucosamine-6-phosphate deaminase (234 aa).

Residue aspartate 62 is the Proton acceptor; for enolization step of the active site. Asparagine 128 (for ring-opening step) is an active-site residue. The active-site Proton acceptor; for ring-opening step is histidine 130. Glutamate 135 functions as the For ring-opening step in the catalytic mechanism.

Belongs to the glucosamine/galactosamine-6-phosphate isomerase family. NagB subfamily.

It carries out the reaction alpha-D-glucosamine 6-phosphate + H2O = beta-D-fructose 6-phosphate + NH4(+). It functions in the pathway amino-sugar metabolism; N-acetylneuraminate degradation; D-fructose 6-phosphate from N-acetylneuraminate: step 5/5. Its function is as follows. Catalyzes the reversible isomerization-deamination of glucosamine 6-phosphate (GlcN6P) to form fructose 6-phosphate (Fru6P) and ammonium ion. The polypeptide is Glucosamine-6-phosphate deaminase (Streptococcus equi subsp. zooepidemicus (strain H70)).